A 432-amino-acid polypeptide reads, in one-letter code: MRVVILGSGVVGVTSAWYLSQAGHDVTVIDRESGPAQGTSAANAGQISPGYAAPWAAPGVPLKAIKWMFQRHAPLAVRLDGTPFQLKWMWQMLRNCDTRHYMENKGRMVRLAEYSRDCLKTLRAETGIKYEGRQGGTLQLFRTARQYENATRDIAVLEDAGVPYQLLESSRLAEVEPALAEVAHKLTGGLRLPNDETGDCQLFTQRLAHMAEQAGVTFRFNTPVEKLLYENEQIYGVKCADEIIKADAYVMAFGSYSTAMLKGIVDIPVYPLKGYSLTIPIVEPDGAPVSTILDETYKIAITRFDKRIRVGGMAEIVGFNTDLQQPRRETLEMVVRDLFPRGGRIEQATFWTGLRPMTPDGTPVVGRTRFKNLWLNTGHGTLGWTMACGSGQLLSDILSGRTPAIPYDDLSIARYRSDFAPSRQQRLHSAHN.

Residue 3–17 participates in FAD binding; the sequence is VVILGSGVVGVTSAW.

Belongs to the DadA oxidoreductase family. FAD serves as cofactor.

The enzyme catalyses a D-alpha-amino acid + A + H2O = a 2-oxocarboxylate + AH2 + NH4(+). Its pathway is amino-acid degradation; D-alanine degradation; NH(3) and pyruvate from D-alanine: step 1/1. Functionally, oxidative deamination of D-amino acids. In Salmonella arizonae (strain ATCC BAA-731 / CDC346-86 / RSK2980), this protein is D-amino acid dehydrogenase.